The primary structure comprises 157 residues: 2-C-methyl-D-erythritol 2,4-cyclodiphosphate synthase (157 aa).

Aspartate 9 and histidine 11 together coordinate a divalent metal cation. Residues 9 to 11 and 35 to 36 contribute to the 4-CDP-2-C-methyl-D-erythritol 2-phosphate site; these read DVH and HS. Histidine 43 is a binding site for a divalent metal cation. Residues 57–59, phenylalanine 140, and arginine 143 each bind 4-CDP-2-C-methyl-D-erythritol 2-phosphate; that span reads DIG.

This sequence belongs to the IspF family. As to quaternary structure, homotrimer. It depends on a divalent metal cation as a cofactor.

It catalyses the reaction 4-CDP-2-C-methyl-D-erythritol 2-phosphate = 2-C-methyl-D-erythritol 2,4-cyclic diphosphate + CMP. It participates in isoprenoid biosynthesis; isopentenyl diphosphate biosynthesis via DXP pathway; isopentenyl diphosphate from 1-deoxy-D-xylulose 5-phosphate: step 4/6. Functionally, involved in the biosynthesis of isopentenyl diphosphate (IPP) and dimethylallyl diphosphate (DMAPP), two major building blocks of isoprenoid compounds. Catalyzes the conversion of 4-diphosphocytidyl-2-C-methyl-D-erythritol 2-phosphate (CDP-ME2P) to 2-C-methyl-D-erythritol 2,4-cyclodiphosphate (ME-CPP) with a corresponding release of cytidine 5-monophosphate (CMP). The chain is 2-C-methyl-D-erythritol 2,4-cyclodiphosphate synthase from Caldicellulosiruptor bescii (strain ATCC BAA-1888 / DSM 6725 / KCTC 15123 / Z-1320) (Anaerocellum thermophilum).